We begin with the raw amino-acid sequence, 278 residues long: Probable endonuclease LCL3 (278 aa).

Residues 15–37 (FSSDVVLLSLLISGSTLGAIAGY) traverse the membrane as a helical segment. Residues 58–263 (RWMYGKVTAV…KAKKRGLWRQ (206 aa)) form the TNase-like domain. Arg-154 is a catalytic residue. Asp-159 is a binding site for Ca(2+). Active-site residues include Glu-162 and Arg-202.

The protein belongs to the LCL3 family.

The protein resides in the mitochondrion. It localises to the membrane. The protein is Probable endonuclease LCL3 (LCL3) of Vanderwaltozyma polyspora (strain ATCC 22028 / DSM 70294 / BCRC 21397 / CBS 2163 / NBRC 10782 / NRRL Y-8283 / UCD 57-17) (Kluyveromyces polysporus).